The sequence spans 162 residues: NADH-quinone oxidoreductase subunit I (162 aa).

4Fe-4S ferredoxin-type domains follow at residues 52 to 82 (LRRY…IEAG) and 93 to 122 (TRYD…EGPN). 8 residues coordinate [4Fe-4S] cluster: Cys-62, Cys-65, Cys-68, Cys-72, Cys-102, Cys-105, Cys-108, and Cys-112.

This sequence belongs to the complex I 23 kDa subunit family. NDH-1 is composed of 14 different subunits. Subunits NuoA, H, J, K, L, M, N constitute the membrane sector of the complex. The cofactor is [4Fe-4S] cluster.

Its subcellular location is the cell inner membrane. It carries out the reaction a quinone + NADH + 5 H(+)(in) = a quinol + NAD(+) + 4 H(+)(out). NDH-1 shuttles electrons from NADH, via FMN and iron-sulfur (Fe-S) centers, to quinones in the respiratory chain. The immediate electron acceptor for the enzyme in this species is believed to be ubiquinone. Couples the redox reaction to proton translocation (for every two electrons transferred, four hydrogen ions are translocated across the cytoplasmic membrane), and thus conserves the redox energy in a proton gradient. The protein is NADH-quinone oxidoreductase subunit I of Beijerinckia indica subsp. indica (strain ATCC 9039 / DSM 1715 / NCIMB 8712).